A 174-amino-acid chain; its full sequence is Large ribosomal subunit protein uL18 (174 aa).

It belongs to the universal ribosomal protein uL18 family. In terms of assembly, part of the 50S ribosomal subunit. Contacts the 5S and 23S rRNAs.

This is one of the proteins that bind and probably mediate the attachment of the 5S RNA into the large ribosomal subunit, where it forms part of the central protuberance. The protein is Large ribosomal subunit protein uL18 of Methanosarcina mazei (strain ATCC BAA-159 / DSM 3647 / Goe1 / Go1 / JCM 11833 / OCM 88) (Methanosarcina frisia).